Consider the following 287-residue polypeptide: Inorganic pyrophosphatase (287 aa).

Arg79 contacts diphosphate. Residues Asp116, Asp121, and Asp153 each contribute to the Mg(2+) site.

Belongs to the PPase family. Mg(2+) serves as cofactor.

The protein resides in the cytoplasm. The enzyme catalyses diphosphate + H2O = 2 phosphate + H(+). This chain is Inorganic pyrophosphatase (IPP1), found in Zygosaccharomyces bailii.